The following is a 532-amino-acid chain: Deoxyribodipyrimidine photo-lyase (532 aa).

A disordered region spans residues 1-57 (MDSKKRSHSTGGEAENMESQESKAKRKPLQKHQFSKSNVVQKEEKDKTEGEEKGAEG). The span at 24-34 (AKRKPLQKHQF) shows a compositional bias: basic residues. Residues 41–55 (QKEEKDKTEGEEKGA) show a composition bias toward basic and acidic residues. One can recognise a Photolyase/cryptochrome alpha/beta domain in the interval 97–229 (QAFVYWMSRD…QVDAHNIVPC (133 aa)). A DNA-binding site is contributed by arginine 322. 2 interaction with DNA regions span residues 368 to 376 (EAVVRRELA) and 442 to 443 (GF). 468-470 (YLN) is an FAD binding site.

The protein belongs to the DNA photolyase class-2 family. It depends on FAD as a cofactor.

The catalysed reaction is cyclobutadipyrimidine (in DNA) = 2 pyrimidine residues (in DNA).. In terms of biological role, involved in repair of UV radiation-induced DNA damage. Catalyzes the light-dependent monomerization (300-600 nm) of cyclobutyl pyrimidine dimers (in cis-syn configuration), which are formed between adjacent bases on the same DNA strand upon exposure to ultraviolet radiation. This chain is Deoxyribodipyrimidine photo-lyase (PHR), found in Potorous tridactylus (Potoroo).